Consider the following 547-residue polypeptide: Chaperonin GroEL 1 (547 aa).

Residues 30-33 (TLGP), K51, 87-91 (DGTTT), G415, 479-481 (NAA), and D495 each bind ATP. Residues 525–547 (PKKKGAPAGGGMGGMGGMDEMDY) are disordered. The span at 531–541 (PAGGGMGGMGG) shows a compositional bias: gly residues.

This sequence belongs to the chaperonin (HSP60) family. In terms of assembly, forms a cylinder of 14 subunits composed of two heptameric rings stacked back-to-back. Interacts with the co-chaperonin GroES.

The protein localises to the cytoplasm. The enzyme catalyses ATP + H2O + a folded polypeptide = ADP + phosphate + an unfolded polypeptide.. Functionally, together with its co-chaperonin GroES, plays an essential role in assisting protein folding. The GroEL-GroES system forms a nano-cage that allows encapsulation of the non-native substrate proteins and provides a physical environment optimized to promote and accelerate protein folding. The chain is Chaperonin GroEL 1 from Anaeromyxobacter sp. (strain Fw109-5).